A 293-amino-acid polypeptide reads, in one-letter code: tRNA pseudouridine synthase B (293 aa).

Asp-39 functions as the Nucleophile in the catalytic mechanism.

The protein belongs to the pseudouridine synthase TruB family. Type 1 subfamily.

It catalyses the reaction uridine(55) in tRNA = pseudouridine(55) in tRNA. Its function is as follows. Responsible for synthesis of pseudouridine from uracil-55 in the psi GC loop of transfer RNAs. The chain is tRNA pseudouridine synthase B from Rickettsia bellii (strain OSU 85-389).